The following is a 301-amino-acid chain: uncharacterized protein (301 aa).

A signal peptide spans 1-21; that stretch reads MKIKLILVLIVFLTIVNVNNS. Residues Asn-19, Asn-59, Asn-102, and Asn-180 are each glycosylated (N-linked (GlcNAc...) asparagine).

The protein localises to the secreted. This is an uncharacterized protein from Dictyostelium discoideum (Social amoeba).